Reading from the N-terminus, the 540-residue chain is Putative F-box/LRR-repeat protein At5g41840 (540 aa).

Residues 13 to 61 form the F-box domain; sequence GDRISGLPDALICHILSFLPTKEAASTTVLAKRWKPLLAFVPNLNFDDS. LRR repeat units lie at residues 80–105, 137–165, 189–214, 217–242, 254–282, 329–360, and 361–386; these read FMSF…HVKC, RNYC…KIQF, YFKI…VLAN, WADS…NFCR, YEDY…EYSD, ILYL…TIKT, and TPYV…VFEG.

The protein is Putative F-box/LRR-repeat protein At5g41840 of Arabidopsis thaliana (Mouse-ear cress).